Consider the following 306-residue polypeptide: Natural cytotoxicity triggering receptor 1 (306 aa).

A signal peptide spans 1–21 (MSSTLRALLCLGLCLSQRISA). Over 22 to 257 (PKQTLPKPII…WDHTAQNLLR (236 aa)) the chain is Extracellular. Ig-like domains follow at residues 42-100 (EKQA…SCIY) and 137-192 (GEKV…RCFG). 2 disulfides stabilise this stretch: Cys49-Cys98 and Cys144-Cys190. A glycan (N-linked (GlcNAc...) asparagine) is linked at Asn216. The helical transmembrane segment at 258–278 (MGLAFLVLVALVCLLVEDWLS) threads the bilayer. Topologically, residues 279-306 (RKRTREQASRASTWEGRRRLNKHKDSEE) are cytoplasmic.

This sequence belongs to the natural cytotoxicity receptor (NCR) family. Interacts with CD3Z and FCER1G. In terms of tissue distribution, expressed in NK cells.

The protein resides in the cell membrane. In terms of biological role, cytotoxicity-activating receptor that may contribute to the increased efficiency of activated natural killer (NK) cells to mediate tumor cell lysis. This chain is Natural cytotoxicity triggering receptor 1 (NCR1), found in Macaca fascicularis (Crab-eating macaque).